We begin with the raw amino-acid sequence, 308 residues long: D-alanine--D-alanine ligase (308 aa).

An ATP-grasp domain is found at 102 to 302 (KKVAAAAGVA…FGELLSWMVE (201 aa)). Residue 128 to 183 (PMEPPYVVKPVREGSSFGVVIVKEDQTHPPQIISSAEWNYGAEVLVEKYIPGRELT) coordinates ATP. 3 residues coordinate Mg(2+): D252, E269, and N271.

The protein belongs to the D-alanine--D-alanine ligase family. Mg(2+) serves as cofactor. Requires Mn(2+) as cofactor.

The protein localises to the cytoplasm. The enzyme catalyses 2 D-alanine + ATP = D-alanyl-D-alanine + ADP + phosphate + H(+). Its pathway is cell wall biogenesis; peptidoglycan biosynthesis. Its function is as follows. Cell wall formation. The sequence is that of D-alanine--D-alanine ligase from Brucella anthropi (strain ATCC 49188 / DSM 6882 / CCUG 24695 / JCM 21032 / LMG 3331 / NBRC 15819 / NCTC 12168 / Alc 37) (Ochrobactrum anthropi).